A 653-amino-acid polypeptide reads, in one-letter code: Laccase ustL (653 aa).

An N-terminal signal peptide occupies residues 1–20 (MTSLTGLALLLCVLASQSWA). Plastocyanin-like domains lie at 31–143 (WEKG…RPKR) and 173–362 (VLSD…ATQV). N-linked (GlcNAc...) asparagine glycosylation is found at Asn-74, Asn-220, Asn-235, Asn-255, Asn-277, Asn-405, Asn-463, and Asn-479. The Plastocyanin-like 3 domain maps to 463-594 (NQTVGTEDEK…GGMSIALLDG (132 aa)). Cu cation contacts are provided by His-501, His-504, His-506, His-576, Cys-577, His-578, and His-582. N-linked (GlcNAc...) asparagine glycosylation occurs at Asn-623.

The protein belongs to the multicopper oxidase family.

The catalysed reaction is 4 norrubrofusarin + O2 = 2 ustilaginoidin A + 2 H2O. It participates in secondary metabolite biosynthesis. In terms of biological role, laccase; part of the gene cluster that mediates the biosynthesis of ustilaginoidins, dimeric gamma-naphthopyrones isolated from different fungal species. The first step in the biosynthesis of ustilaginoidins is the production of gamma-naphthopyrone precursor YWA1 by the non-reducing polyketide synthase ustP, via condensation of one acetyl-CoA starter unit with 6 malonyl-CoA units. YWA1 is then probably substrate of the ustZ to yield norrubrofusarin via a dehydration reaction. A key enzyme in the biosynthetic pathway is the laccase ustL, which catalyzes the oxidative dimerization of norrubrofusarin to ustilaginoidin A. It can produce the M- and P-atropisomers in varying amounts, depending on the reaction conditions. For the biosynthesis of 3-methylustilaginoid in derivatives such as chaetochromin A, a methylated derivative of YWA1 is required. The C-methylation is considered to be catalyzed by ustM, the phosphopantetheine attachment site of which indicates that it acts on the growing polyketide chain before release of the product. For the biosynthesis of chaetochromin A, it is assumed that saturation of the D2 double bond takes place before dimerization, and is probably catalyzed by an external reductase because no candidate gene was identified within the cluster. The protein is Laccase ustL of Ustilaginoidea virens (Rice false smut fungus).